Here is a 261-residue protein sequence, read N- to C-terminus: 3-deoxy-manno-octulosonate cytidylyltransferase (261 aa).

It belongs to the KdsB family.

It is found in the cytoplasm. The enzyme catalyses 3-deoxy-alpha-D-manno-oct-2-ulosonate + CTP = CMP-3-deoxy-beta-D-manno-octulosonate + diphosphate. The protein operates within nucleotide-sugar biosynthesis; CMP-3-deoxy-D-manno-octulosonate biosynthesis; CMP-3-deoxy-D-manno-octulosonate from 3-deoxy-D-manno-octulosonate and CTP: step 1/1. Its pathway is bacterial outer membrane biogenesis; lipopolysaccharide biosynthesis. Activates KDO (a required 8-carbon sugar) for incorporation into bacterial lipopolysaccharide in Gram-negative bacteria. The polypeptide is 3-deoxy-manno-octulosonate cytidylyltransferase (Dechloromonas aromatica (strain RCB)).